We begin with the raw amino-acid sequence, 547 residues long: Chaperonin GroEL (547 aa).

ATP is bound by residues 30–33 (TLGP), Lys51, 87–91 (DGTTT), Gly415, and Asp495.

It belongs to the chaperonin (HSP60) family. In terms of assembly, forms a cylinder of 14 subunits composed of two heptameric rings stacked back-to-back. Interacts with the co-chaperonin GroES.

The protein resides in the cytoplasm. The catalysed reaction is ATP + H2O + a folded polypeptide = ADP + phosphate + an unfolded polypeptide.. Together with its co-chaperonin GroES, plays an essential role in assisting protein folding. The GroEL-GroES system forms a nano-cage that allows encapsulation of the non-native substrate proteins and provides a physical environment optimized to promote and accelerate protein folding. This is Chaperonin GroEL from Aggregatibacter actinomycetemcomitans (Actinobacillus actinomycetemcomitans).